The sequence spans 447 residues: Voltage-gated purine nucleotide uniporter SLC17A9 (447 aa).

Residues 1-26 (MPSQRSSLMQPIPEETRKTPSAAAED) are disordered. The segment covering 14–26 (EETRKTPSAAAED) has biased composition (basic and acidic residues). 11 helical membrane passes run 36–58 (LWTGMLLLGTCLLYCTRVTMPVC), 74–94 (GIVLSSFFWGYCLTQVVGGHL), 103–123 (VILLSASAWGFITVTTPLLAH), 129–149 (LAFVTFSRILTGLLQGVYFPA), 169–189 (TVGAGSQVGTLVTGGIGSVLL), 197–217 (VFYFSGGLTLLWVYYVYKYLL), 252–272 (VWAVICSQLSSACSFFILLSW), 287–307 (WVFNVVPWLLAIPASLFSGFI), 327–347 (VMGLGLSSIFALCLGHTTSFL), 380–400 (GFLFGVANTAGALAGVVGVCL), and 413–433 (CVFHLVAIVSNLGLGTFLVFG).

It belongs to the major facilitator superfamily. Sodium/anion cotransporter family.

It is found in the cytoplasmic vesicle. The protein localises to the secretory vesicle. It localises to the chromaffin granule membrane. The protein resides in the secretory vesicle membrane. Its subcellular location is the lysosome membrane. It catalyses the reaction ATP(in) = ATP(out). The enzyme catalyses ADP(in) = ADP(out). The catalysed reaction is GTP(in) = GTP(out). Activity is chloride-dependent. Its function is as follows. Voltage-gated ATP nucleotide uniporter that can also transport the purine nucleotides ADP and GTP. Uses the membrane potential as the driving force to control ATP accumulation in lysosomes and secretory vesicles. By controlling ATP storage in lysosomes, regulates ATP-dependent proteins of these organelles. Also indirectly regulates the exocytosis of ATP through its import into lysosomes in astrocytes and secretory vesicles such as adrenal chromaffin granules, mucin granules and synaptic vesicles. The polypeptide is Voltage-gated purine nucleotide uniporter SLC17A9 (Rattus norvegicus (Rat)).